A 187-amino-acid chain; its full sequence is Interferon beta (187 aa).

The N-terminal stretch at 1–21 (MTNKCLLQIALLLCFSTTALS) is a signal peptide. Y24 bears the Phosphotyrosine mark. Cysteines 52 and 162 form a disulfide. The N-linked (GlcNAc...) asparagine glycan is linked to N101.

It belongs to the alpha/beta interferon family. As to quaternary structure, monomer.

The protein localises to the secreted. Its function is as follows. Type I interferon cytokine that plays a key role in the innate immune response to infection, developing tumors and other inflammatory stimuli. Signals via binding to high-affinity (IFNAR2) and low-affinity (IFNAR1) heterodimeric receptor, activating the canonical Jak-STAT signaling pathway resulting in transcriptional activation or repression of interferon-regulated genes that encode the effectors of the interferon response, such as antiviral proteins, regulators of cell proliferation and differentiation, and immunoregulatory proteins. Signals mostly via binding to a IFNAR1-IFNAR2 heterodimeric receptor, but can also function with IFNAR1 alone and independently of Jak-STAT pathways. Elicits a wide variety of responses, including antiviral and antibacterial activities, and can regulate the development of B-cells, myelopoiesis and lipopolysaccharide (LPS)-inducible production of tumor necrosis factor. Plays a role in neuronal homeostasis by regulating dopamine turnover and protecting dopaminergic neurons: acts by promoting neuronal autophagy and alpha-synuclein clearance, thereby preventing dopaminergic neuron loss. IFNB1 is more potent than interferon-alpha (IFN-alpha) in inducing the apoptotic and antiproliferative pathways required for control of tumor cell growth. The sequence is that of Interferon beta from Homo sapiens (Human).